The following is a 150-amino-acid chain: Avidin-related protein 7 (150 aa).

The first 24 residues, 1-24 (MVHATSPLLLLLLLSLALVAPGLS), serve as a signal peptide directing secretion. The Avidin-like domain maps to 26–147 (RKCSLTGEWD…GYNNFTRQRT (122 aa)). The cysteines at positions 28 and 105 are disulfide-linked. 2 residues coordinate biotin: N36 and S40. Residues N41 and N54 are each glycosylated (N-linked (GlcNAc...) asparagine). Biotin-binding residues include Y57, T59, and D63. N93 carries an N-linked (GlcNAc...) asparagine glycan. S95, S99, and N140 together coordinate biotin. N-linked (GlcNAc...) asparagine glycosylation occurs at N141.

The protein belongs to the avidin/streptavidin family. As to quaternary structure, homotetramer. In terms of processing, glycosylated.

The protein resides in the secreted. In terms of biological role, forms a strong non-covalent specific complex with biotin. The protein is Avidin-related protein 7 (AVR7) of Gallus gallus (Chicken).